The primary structure comprises 216 residues: Thylakoid lumenal 16.5 kDa protein, chloroplastic (216 aa).

The transit peptide at 1-38 (MAKSLLCSSTLNPFFSTTLSSSKKNQIAYSGNSKNQTS) directs the protein to the chloroplast. Residues 39 to 73 (SSLLWKRRELSLGFMSSLVAIGLVSNDRRRHDANA) constitute a thylakoid transit peptide.

The protein localises to the plastid. It is found in the chloroplast thylakoid lumen. The polypeptide is Thylakoid lumenal 16.5 kDa protein, chloroplastic (Arabidopsis thaliana (Mouse-ear cress)).